The following is a 543-amino-acid chain: CTP synthase (543 aa).

Positions 1 to 265 (MARFIFITGG…DSEVLRAFGI (265 aa)) are amidoligase domain. Ser13 serves as a coordination point for CTP. Residue Ser13 coordinates UTP. Residue 14-19 (SLGKGL) participates in ATP binding. Position 54 (Tyr54) interacts with L-glutamine. Asp71 is an ATP binding site. Asp71 and Glu139 together coordinate Mg(2+). Residues 146 to 148 (DIE), 186 to 191 (KTKPTQ), and Lys222 each bind CTP. UTP is bound by residues 186–191 (KTKPTQ) and Lys222. Positions 291-542 (TIGVVGKYVS…IEAAVKQSRL (252 aa)) constitute a Glutamine amidotransferase type-1 domain. Residue Gly354 participates in L-glutamine binding. The Nucleophile; for glutamine hydrolysis role is filled by Cys381. L-glutamine contacts are provided by residues 382–385 (LGMQ), Glu405, and Arg470. Residues His515 and Glu517 contribute to the active site.

The protein belongs to the CTP synthase family. Homotetramer.

It carries out the reaction UTP + L-glutamine + ATP + H2O = CTP + L-glutamate + ADP + phosphate + 2 H(+). It catalyses the reaction L-glutamine + H2O = L-glutamate + NH4(+). The catalysed reaction is UTP + NH4(+) + ATP = CTP + ADP + phosphate + 2 H(+). It participates in pyrimidine metabolism; CTP biosynthesis via de novo pathway; CTP from UDP: step 2/2. With respect to regulation, allosterically activated by GTP, when glutamine is the substrate; GTP has no effect on the reaction when ammonia is the substrate. The allosteric effector GTP functions by stabilizing the protein conformation that binds the tetrahedral intermediate(s) formed during glutamine hydrolysis. Inhibited by the product CTP, via allosteric rather than competitive inhibition. In terms of biological role, catalyzes the ATP-dependent amination of UTP to CTP with either L-glutamine or ammonia as the source of nitrogen. Regulates intracellular CTP levels through interactions with the four ribonucleotide triphosphates. This chain is CTP synthase, found in Sphingopyxis alaskensis (strain DSM 13593 / LMG 18877 / RB2256) (Sphingomonas alaskensis).